We begin with the raw amino-acid sequence, 295 residues long: Cyclin-G1 (295 aa).

This sequence belongs to the cyclin family. Cyclin G subfamily. In terms of tissue distribution, high levels in skeletal muscle, ovary, kidney and colon.

The protein localises to the nucleus. Functionally, may play a role in growth regulation. Is associated with G2/M phase arrest in response to DNA damage. May be an intermediate by which p53 mediates its role as an inhibitor of cellular proliferation. This Homo sapiens (Human) protein is Cyclin-G1 (CCNG1).